The chain runs to 881 residues: Serine/threonine-protein phosphatase BSL1 (881 aa).

Kelch repeat units follow at residues 60–109 (GSSS…AVGT), 269–320 (RLHV…DQDP), and 338–385 (RIYV…PRFS). 2 disordered regions span residues 368-407 (SPLL…LSLD) and 436-464 (AGTL…ANEG). 2 stretches are compositionally biased toward polar residues: residues 374 to 383 (DRTQQSSTPR) and 445 to 460 (TSDA…TDGT). Residue Ser491 is modified to Phosphoserine. Positions 503-522 (VPMNNSDVPQPTKKFTRQKS) are disordered. 4 residues coordinate Mn(2+): Asp584, His586, Asp618, and Asn650. The active-site Proton donor is His651. 2 residues coordinate Mn(2+): His703 and His782. The interval 837–881 (ILSPENSPEHSGDDAWMQELNIQRPPTPTRGRPQPDFDRSSLAYI) is disordered. Phosphoserine is present on Ser839.

This sequence belongs to the PPP phosphatase family. BSU subfamily. In terms of assembly, interacts with CDG1 and CDL1. Mn(2+) is required as a cofactor. In terms of tissue distribution, expressed in mature cauline leaves and at the tip of influorescence, including flowers. Expressed at lower level in young tissues relative to older ones.

It is found in the nucleus. It catalyses the reaction O-phospho-L-seryl-[protein] + H2O = L-seryl-[protein] + phosphate. The enzyme catalyses O-phospho-L-threonyl-[protein] + H2O = L-threonyl-[protein] + phosphate. Its function is as follows. Phosphatase involved in elongation process, probably by acting as a regulator of brassinolide signaling. In Arabidopsis thaliana (Mouse-ear cress), this protein is Serine/threonine-protein phosphatase BSL1 (BSL1).